Here is a 196-residue protein sequence, read N- to C-terminus: Inosine triphosphate pyrophosphatase 1 (196 aa).

20-25 (TGNDGK) is an ITP binding site. Glu-48 is a binding site for Mg(2+). Residues Lys-61, 77 to 78 (DT), Lys-94, 153 to 156 (FGWD), Lys-177, and 182 to 183 (PR) contribute to the ITP site.

This sequence belongs to the HAM1 NTPase family. Homodimer. Mg(2+) is required as a cofactor. Requires Mn(2+) as cofactor.

The protein resides in the cytoplasm. The catalysed reaction is ITP + H2O = IMP + diphosphate + H(+). The enzyme catalyses dITP + H2O = dIMP + diphosphate + H(+). It catalyses the reaction XTP + H2O = XMP + diphosphate + H(+). In terms of biological role, pyrophosphatase that hydrolyzes non-canonical purine nucleotides such as inosine triphosphate (ITP), deoxyinosine triphosphate (dITP) or xanthosine 5'-triphosphate (XTP) to their respective monophosphate derivatives. The enzyme does not distinguish between the deoxy- and ribose forms. Probably excludes non-canonical purines from RNA and DNA precursor pools, thus preventing their incorporation into RNA and DNA and avoiding chromosomal lesions. The protein is Inosine triphosphate pyrophosphatase 1 of Trypanosoma cruzi (strain CL Brener).